The primary structure comprises 1125 residues: Kinase and exchange factor for Rac B (1125 aa).

3 disordered regions span residues 50 to 175 (VTGG…ASIN), 247 to 287 (SVPG…GGKF), and 322 to 362 (KTRD…VNSD). A compositionally biased stretch (low complexity) spans 59 to 91 (NNQQQQQNNNNNNNNNNNNNNNNNNNNNNNNNN). Over residues 92-106 (SGEISSNNSTPSILF) the composition is skewed to polar residues. Over residues 113–124 (TAPPAPPQPTTP) the composition is skewed to pro residues. Positions 137-161 (NINQQPIGGVNNNNNNNNKDSPSNK) are enriched in low complexity. The DH domain occupies 380-571 (KRRQVSLQIL…KSTVDYVKEK (192 aa)). A PH domain is found at 601–822 (RYVREGMLTE…WIQAIHANII (222 aa)). Disordered regions lie at residues 693 to 729 (INNM…SNNN) and 761 to 791 (SNNN…YSNG). A compositionally biased stretch (low complexity) spans 694-729 (NNMTNNDSKSKNNNNNNSNGNNNNNNINSNSNSNNN). A Protein kinase domain is found at 848–1117 (IKLCEQIGSG…QLVQKLTKML (270 aa)). ATP is bound by residues 854 to 862 (IGSGGSGCT) and Lys-876. The Proton acceptor role is filled by Asp-971.

It belongs to the protein kinase superfamily. STE Ser/Thr protein kinase family. Mg(2+) is required as a cofactor.

The enzyme catalyses L-seryl-[protein] + ATP = O-phospho-L-seryl-[protein] + ADP + H(+). It carries out the reaction L-threonyl-[protein] + ATP = O-phospho-L-threonyl-[protein] + ADP + H(+). This chain is Kinase and exchange factor for Rac B, found in Dictyostelium discoideum (Social amoeba).